Consider the following 805-residue polypeptide: Mediator of RNA polymerase II transcription subunit 25 (805 aa).

Disordered regions lie at residues 308–332 and 647–691; these read NQMPPTSAVGTPFNQPPPPAMPQNT and QQPQ…NPQL. Residues 647–678 are compositionally biased toward low complexity; the sequence is QQPQQAASQAPPQATQTTVQAPGQPQNPQPGA. The LXXLL motif signature appears at 691-695; it reads LRNLL.

Belongs to the Mediator complex subunit 25 family. Component of the Mediator complex.

The protein resides in the nucleus. Component of the Mediator complex, a coactivator involved in the regulated transcription of nearly all RNA polymerase II-dependent genes. Mediator functions as a bridge to convey information from gene-specific regulatory proteins to the basal RNA polymerase II transcription machinery. Mediator is recruited to promoters by direct interactions with regulatory proteins and serves as a scaffold for the assembly of a functional preinitiation complex with RNA polymerase II and the general transcription factors. The protein is Mediator of RNA polymerase II transcription subunit 25 (med25) of Xenopus tropicalis (Western clawed frog).